A 115-amino-acid chain; its full sequence is Large ribosomal subunit protein bL19 (115 aa).

Belongs to the bacterial ribosomal protein bL19 family.

Functionally, this protein is located at the 30S-50S ribosomal subunit interface and may play a role in the structure and function of the aminoacyl-tRNA binding site. The protein is Large ribosomal subunit protein bL19 of Lawsonia intracellularis (strain PHE/MN1-00).